Reading from the N-terminus, the 434-residue chain is MGKEKPHINLVVIGHVVAGKSTTTGHLIYACGGIDKRTIERFEEGGQRIGKGSFKYAWVLAKMKAERERGITIDISLWKFETRKDFFTIIDAPGHRDFIKNMITGTSQADVAILVIASGAGEFEAGYSKNGQTREHALLANTLGVKQMIVCCNKMDDKSVNYSEARYKEIKNEMTSFLTKVGYAKVEERIPFIPISGFNGDNMIEHSANMPWYKGPTLLEALDNVHPPKRPVDKPLRLPLQDVYKIGGIGTVPVGRVETGVLKPGMTVTFAPVNVSTEVKSVEMHHESIPQALPGDNVGFNVNNVSVEDIHRGNVCGDAKNDPPCKTESDAQVIVMNHPSGIRPGYCPVVDCHTAHIACKFEKIMSEMDKRTGKVLRENPDIVKNGKSMMAQLVPSKPMCVETFSDYPPLGRFAVRDMRQTVAVGIIKSTVRAK.

The tr-type G domain occupies 5–232 (KPHINLVVIG…DNVHPPKRPV (228 aa)). The segment at 14 to 21 (GHVVAGKS) is G1. 14 to 21 (GHVVAGKS) lines the GTP pocket. The G2 stretch occupies residues 70-74 (GITID). Residues 91-94 (DAPG) form a G3 region. Residues 91–95 (DAPGH) and 153–156 (NKMD) each bind GTP. Residues 153–156 (NKMD) are G4. Positions 196–198 (SGF) are G5.

It belongs to the TRAFAC class translation factor GTPase superfamily. Classic translation factor GTPase family. EF-Tu/EF-1A subfamily.

The protein localises to the cytoplasm. Functionally, this protein promotes the GTP-dependent binding of aminoacyl-tRNA to the A-site of ribosomes during protein biosynthesis. This chain is Elongation factor 1-alpha, found in Blastocystis hominis.